We begin with the raw amino-acid sequence, 92 residues long: Large ribosomal subunit protein bL25 (92 aa).

It belongs to the bacterial ribosomal protein bL25 family. In terms of assembly, part of the 50S ribosomal subunit; part of the 5S rRNA/L5/L18/L25 subcomplex. Contacts the 5S rRNA. Binds to the 5S rRNA independently of L5 and L18.

Functionally, this is one of the proteins that binds to the 5S RNA in the ribosome where it forms part of the central protuberance. This chain is Large ribosomal subunit protein bL25, found in Vibrio atlanticus (strain LGP32) (Vibrio splendidus (strain Mel32)).